The primary structure comprises 371 residues: Cytochrome b (371 aa).

The next 4 membrane-spanning stretches (helical) occupy residues 25–45 (FGSM…FLAV), 69–90 (WLMQ…YTHI), 105–125 (WLSG…GYVL), and 170–190 (FFAL…LHIM). Residues H75 and H89 each coordinate heme b. Heme b contacts are provided by H174 and H188. H193 provides a ligand contact to a ubiquinone. 4 helical membrane-spanning segments follow: residues 218-238 (YKDM…VAFF), 280-300 (LGGA…PFTH), 312-332 (IMQF…WAAT), and 339-358 (FTAI…ITNP).

This sequence belongs to the cytochrome b family. The cytochrome bc1 complex contains 3 respiratory subunits (MT-CYB, CYC1 and UQCRFS1), 2 core proteins (UQCRC1 and UQCRC2) and probably 6 low-molecular weight proteins. Requires heme b as cofactor.

It localises to the mitochondrion inner membrane. Functionally, component of the ubiquinol-cytochrome c reductase complex (complex III or cytochrome b-c1 complex) that is part of the mitochondrial respiratory chain. The b-c1 complex mediates electron transfer from ubiquinol to cytochrome c. Contributes to the generation of a proton gradient across the mitochondrial membrane that is then used for ATP synthesis. This chain is Cytochrome b (MT-CYB), found in Eryx colubrinus loveridgei.